A 61-amino-acid chain; its full sequence is Temporin-CG3 (61 aa).

The signal sequence occupies residues 1–22; that stretch reads MFTMKKPLLLLFFLATINLSLC. Residues 23 to 44 constitute a propeptide, removed in mature form; it reads EQERNAEEERRDEPDERNAEVE.

Belongs to the frog skin active peptide (FSAP) family. Temporin subfamily. As to expression, expressed by the skin glands.

The protein resides in the secreted. In terms of biological role, antimicrobial peptide active against a variety of Gram-positive bacterial strains but not against Gram-negative bacteria. Has weak antifungal activity against a slime mold isolate. Has weak hemolytic activity against human erythrocytes. The protein is Temporin-CG3 of Amolops chunganensis (Chungan torrent frog).